Reading from the N-terminus, the 238-residue chain is GATA transcription factor 7 (238 aa).

The interval 24–64 is disordered; the sequence is TSLESSSSQRKEDEQEREKFKSFSDQSTRLSPPEDLLSFPG. The span at 32–45 shows a compositional bias: basic and acidic residues; sequence QRKEDEQEREKFKS. Residues 112–119 carry the Nuclear localization signal motif; the sequence is KPRSKRRR. The GATA-type zinc finger occupies 160-214; sequence QQLRRCCSHCGVQKTPQWRMGPLGAKTLCNACGVRFKSGRLLPEYRPACSPTFTN.

The protein belongs to the type IV zinc-finger family. Class A subfamily.

It localises to the nucleus. Its function is as follows. Transcriptional activator that specifically binds 5'-GATA-3' or 5'-GAT-3' motifs within gene promoters. May be involved in the regulation of some light-responsive genes. This chain is GATA transcription factor 7 (GATA7), found in Arabidopsis thaliana (Mouse-ear cress).